The following is a 174-amino-acid chain: 3-hydroxydecanoyl-[acyl-carrier-protein] dehydratase (174 aa).

His-73 is an active-site residue.

Belongs to the thioester dehydratase family. FabA subfamily. As to quaternary structure, homodimer.

It is found in the cytoplasm. The catalysed reaction is a (3R)-hydroxyacyl-[ACP] = a (2E)-enoyl-[ACP] + H2O. The enzyme catalyses (3R)-hydroxydecanoyl-[ACP] = (2E)-decenoyl-[ACP] + H2O. It carries out the reaction (2E)-decenoyl-[ACP] = (3Z)-decenoyl-[ACP]. The protein operates within lipid metabolism; fatty acid biosynthesis. Functionally, necessary for the introduction of cis unsaturation into fatty acids. Catalyzes the dehydration of (3R)-3-hydroxydecanoyl-ACP to E-(2)-decenoyl-ACP and then its isomerization to Z-(3)-decenoyl-ACP. Can catalyze the dehydratase reaction for beta-hydroxyacyl-ACPs with saturated chain lengths up to 16:0, being most active on intermediate chain length. In Teredinibacter turnerae (strain ATCC 39867 / T7901), this protein is 3-hydroxydecanoyl-[acyl-carrier-protein] dehydratase.